The chain runs to 250 residues: 5-oxoprolinase subunit A (250 aa).

Belongs to the LamB/PxpA family. As to quaternary structure, forms a complex composed of PxpA, PxpB and PxpC.

The catalysed reaction is 5-oxo-L-proline + ATP + 2 H2O = L-glutamate + ADP + phosphate + H(+). Catalyzes the cleavage of 5-oxoproline to form L-glutamate coupled to the hydrolysis of ATP to ADP and inorganic phosphate. This Paraburkholderia phymatum (strain DSM 17167 / CIP 108236 / LMG 21445 / STM815) (Burkholderia phymatum) protein is 5-oxoprolinase subunit A.